The chain runs to 170 residues: Peptide deformylase 1 (170 aa).

The Fe cation site is built by Cys-91 and His-133. Glu-134 is a catalytic residue. His-137 provides a ligand contact to Fe cation.

This sequence belongs to the polypeptide deformylase family. It depends on Fe(2+) as a cofactor.

It catalyses the reaction N-terminal N-formyl-L-methionyl-[peptide] + H2O = N-terminal L-methionyl-[peptide] + formate. Functionally, removes the formyl group from the N-terminal Met of newly synthesized proteins. Requires at least a dipeptide for an efficient rate of reaction. N-terminal L-methionine is a prerequisite for activity but the enzyme has broad specificity at other positions. This Vibrio vulnificus (strain CMCP6) protein is Peptide deformylase 1.